A 120-amino-acid chain; its full sequence is U13-lycotoxin-Ls1f (120 aa).

The N-terminal stretch at 1 to 19 (MKILFVLISILYAVYRFSS) is a signal peptide. Residues 20-54 (EEDVDSAYLANELEPVEDINSEQYAALEPKEEQER) constitute a propeptide that is removed on maturation. 4 disulfide bridges follow: cysteine 56–cysteine 70, cysteine 63–cysteine 76, cysteine 69–cysteine 87, and cysteine 78–cysteine 85. Positions 56–95 (CAGMGQDCKDDCDCCLNIATCNCWFGRYFCSCTFGDYQTC) constitute an Agouti domain.

This sequence belongs to the neurotoxin 05 (agouti) family. In terms of processing, contains 6 disulfide bonds. As to expression, expressed by the venom gland.

Its subcellular location is the secreted. The chain is U13-lycotoxin-Ls1f from Lycosa singoriensis (Wolf spider).